Reading from the N-terminus, the 214-residue chain is Glycerol-3-phosphate acyltransferase (214 aa).

5 helical membrane passes run 8–28 (LILA…QIFF), 70–90 (LLPL…LIAV), 111–131 (AGVV…IFIV), 144–164 (IVVA…GIIL), and 165–185 (PSYD…ILIR).

The protein belongs to the PlsY family. Probably interacts with PlsX.

The protein resides in the cell membrane. It carries out the reaction an acyl phosphate + sn-glycerol 3-phosphate = a 1-acyl-sn-glycero-3-phosphate + phosphate. Its pathway is lipid metabolism; phospholipid metabolism. In terms of biological role, catalyzes the transfer of an acyl group from acyl-phosphate (acyl-PO(4)) to glycerol-3-phosphate (G3P) to form lysophosphatidic acid (LPA). This enzyme utilizes acyl-phosphate as fatty acyl donor, but not acyl-CoA or acyl-ACP. The sequence is that of Glycerol-3-phosphate acyltransferase from Streptococcus gordonii (strain Challis / ATCC 35105 / BCRC 15272 / CH1 / DL1 / V288).